The sequence spans 446 residues: Exodeoxyribonuclease 7 large subunit (446 aa).

It belongs to the XseA family. Heterooligomer composed of large and small subunits.

The protein localises to the cytoplasm. The enzyme catalyses Exonucleolytic cleavage in either 5'- to 3'- or 3'- to 5'-direction to yield nucleoside 5'-phosphates.. Functionally, bidirectionally degrades single-stranded DNA into large acid-insoluble oligonucleotides, which are then degraded further into small acid-soluble oligonucleotides. The sequence is that of Exodeoxyribonuclease 7 large subunit from Streptococcus thermophilus (strain ATCC BAA-250 / LMG 18311).